The following is a 474-amino-acid chain: MTVKTRFAPSPTGYLHVGGARTALYSWLYAKSQGGEFVLRIEDTDLERSTQAAVDAIIEGMTWLGLEWDEGPYYQTKRFDRYNQVIDQLLAEGKAYKCYAPKELLDEIRAEQEANKEMPRYDANHPKIKAVNDAAKEGEPCCIRFRNPKEGSVVFDDQIRGRIEIRNDQLDDLIIRRTDGTPTYNFCVVVDDVDMGISHVIRGEDHINNTPRQINIYKAMGATIPTFAHCAMILGDDGAKLSKRHGAVSVMQYRDDGYLPEALLNYLVRLGWGHGDQEIFSRDEMINLFSLNAISKSASAFNTDKLLWLNNHYIKTSEPEYVAKHLEWHFENQGINKATGPALAEVVKLVGERCNTLVELAQQSRYFYEDFAEFDADAAKKHLRGVAKEPLMLALSKIEALTEWNTEALHHVIAQVCEELEIGMGKIGMPLRVAVTGGGQSPSVDAVMNLIGQERVIARIKMALEYIETREANA.

A 'HIGH' region motif is present at residues 9–19 (PSPTGYLHVGG). The 'KMSKS' region motif lies at 240–244 (KLSKR). Lys243 is a binding site for ATP.

Belongs to the class-I aminoacyl-tRNA synthetase family. Glutamate--tRNA ligase type 1 subfamily. As to quaternary structure, monomer.

Its subcellular location is the cytoplasm. It carries out the reaction tRNA(Glu) + L-glutamate + ATP = L-glutamyl-tRNA(Glu) + AMP + diphosphate. Its function is as follows. Catalyzes the attachment of glutamate to tRNA(Glu) in a two-step reaction: glutamate is first activated by ATP to form Glu-AMP and then transferred to the acceptor end of tRNA(Glu). The polypeptide is Glutamate--tRNA ligase (Vibrio cholerae serotype O1 (strain ATCC 39315 / El Tor Inaba N16961)).